Consider the following 264-residue polypeptide: 5'-nucleotidase SurE (264 aa).

Residues Asp8, Asp9, Ser41, and Asn98 each contribute to the a divalent metal cation site.

This sequence belongs to the SurE nucleotidase family. A divalent metal cation is required as a cofactor.

The protein localises to the cytoplasm. It carries out the reaction a ribonucleoside 5'-phosphate + H2O = a ribonucleoside + phosphate. Its function is as follows. Nucleotidase that shows phosphatase activity on nucleoside 5'-monophosphates. In Carboxydothermus hydrogenoformans (strain ATCC BAA-161 / DSM 6008 / Z-2901), this protein is 5'-nucleotidase SurE.